Reading from the N-terminus, the 495-residue chain is UDP-N-acetylmuramoyl-L-alanyl-D-glutamate--2,6-diaminopimelate ligase (495 aa).

Residues Leu-27, Ser-29, and 44 to 46 (HQA) contribute to the UDP-N-acetyl-alpha-D-muramoyl-L-alanyl-D-glutamate site. An ATP-binding site is contributed by 116–122 (GTNGKTT). Residues Asn-157, 158-159 (TT), Ser-185, Gln-191, and Arg-193 contribute to the UDP-N-acetyl-alpha-D-muramoyl-L-alanyl-D-glutamate site. Residue Lys-225 is modified to N6-carboxylysine. Residues Arg-390, 414–417 (DNPR), Gly-465, and Glu-469 contribute to the meso-2,6-diaminopimelate site. The Meso-diaminopimelate recognition motif signature appears at 414 to 417 (DNPR).

Belongs to the MurCDEF family. MurE subfamily. Mg(2+) serves as cofactor. Carboxylation is probably crucial for Mg(2+) binding and, consequently, for the gamma-phosphate positioning of ATP.

The protein localises to the cytoplasm. It catalyses the reaction UDP-N-acetyl-alpha-D-muramoyl-L-alanyl-D-glutamate + meso-2,6-diaminopimelate + ATP = UDP-N-acetyl-alpha-D-muramoyl-L-alanyl-gamma-D-glutamyl-meso-2,6-diaminopimelate + ADP + phosphate + H(+). The protein operates within cell wall biogenesis; peptidoglycan biosynthesis. Its function is as follows. Catalyzes the addition of meso-diaminopimelic acid to the nucleotide precursor UDP-N-acetylmuramoyl-L-alanyl-D-glutamate (UMAG) in the biosynthesis of bacterial cell-wall peptidoglycan. This is UDP-N-acetylmuramoyl-L-alanyl-D-glutamate--2,6-diaminopimelate ligase from Enterobacter sp. (strain 638).